A 441-amino-acid chain; its full sequence is Glutamyl-tRNA reductase (441 aa).

Substrate contacts are provided by residues 58–61 (TCNR), serine 116, 121–123 (EPD), and glutamine 127. Cysteine 59 functions as the Nucleophile in the catalytic mechanism. NADP(+) is bound at residue 195-200 (GAGMAG).

This sequence belongs to the glutamyl-tRNA reductase family. In terms of assembly, homodimer.

It catalyses the reaction (S)-4-amino-5-oxopentanoate + tRNA(Glu) + NADP(+) = L-glutamyl-tRNA(Glu) + NADPH + H(+). Its pathway is porphyrin-containing compound metabolism; protoporphyrin-IX biosynthesis; 5-aminolevulinate from L-glutamyl-tRNA(Glu): step 1/2. Its function is as follows. Catalyzes the NADPH-dependent reduction of glutamyl-tRNA(Glu) to glutamate 1-semialdehyde (GSA). In Ignicoccus hospitalis (strain KIN4/I / DSM 18386 / JCM 14125), this protein is Glutamyl-tRNA reductase.